We begin with the raw amino-acid sequence, 143 residues long: Large ribosomal subunit protein uL15 (143 aa).

2 stretches are compositionally biased toward basic residues: residues 1 to 13 (MIRK…KQRG) and 23 to 38 (KKHR…GNAG). Residues 1–38 (MIRKSKKITKQRGSRTCGYGEAKKHRGAGHRGGRGNAG) form a disordered region.

This sequence belongs to the universal ribosomal protein uL15 family. As to quaternary structure, part of the 50S ribosomal subunit.

Functionally, binds to the 23S rRNA. The polypeptide is Large ribosomal subunit protein uL15 (Methanococcus vannielii).